The following is a 119-amino-acid chain: Flagellar transcriptional regulator FlhD (119 aa).

It belongs to the FlhD family. In terms of assembly, homodimer; disulfide-linked. Forms a heterohexamer composed of two FlhC and four FlhD subunits. Each FlhC binds a FlhD dimer, forming a heterotrimer, and a hexamer assembles by dimerization of two heterotrimers.

It localises to the cytoplasm. Functionally, functions in complex with FlhC as a master transcriptional regulator that regulates transcription of several flagellar and non-flagellar operons by binding to their promoter region. Activates expression of class 2 flagellar genes, including fliA, which is a flagellum-specific sigma factor that turns on the class 3 genes. Also regulates genes whose products function in a variety of physiological pathways. The chain is Flagellar transcriptional regulator FlhD from Pectobacterium atrosepticum (strain SCRI 1043 / ATCC BAA-672) (Erwinia carotovora subsp. atroseptica).